We begin with the raw amino-acid sequence, 238 residues long: Flagellar L-ring protein (238 aa).

An N-terminal signal peptide occupies residues 1–17 (MKRRLLAAGCAMLLLSG). The N-palmitoyl cysteine moiety is linked to residue Cys18. A lipid anchor (S-diacylglycerol cysteine) is attached at Cys18. Residues 22–50 (RQQPSPVPPVTQPQAYAEPEDTAANPGSL) are disordered.

The protein belongs to the FlgH family. The basal body constitutes a major portion of the flagellar organelle and consists of four rings (L,P,S, and M) mounted on a central rod.

It localises to the cell outer membrane. Its subcellular location is the bacterial flagellum basal body. Functionally, assembles around the rod to form the L-ring and probably protects the motor/basal body from shearing forces during rotation. This is Flagellar L-ring protein from Nitratidesulfovibrio vulgaris (strain DSM 19637 / Miyazaki F) (Desulfovibrio vulgaris).